A 174-amino-acid chain; its full sequence is Crossover junction endodeoxyribonuclease RuvC (174 aa).

Catalysis depends on residues D8, E67, and D139. Mg(2+) contacts are provided by D8, E67, and D139.

The protein belongs to the RuvC family. In terms of assembly, homodimer which binds Holliday junction (HJ) DNA. The HJ becomes 2-fold symmetrical on binding to RuvC with unstacked arms; it has a different conformation from HJ DNA in complex with RuvA. In the full resolvosome a probable DNA-RuvA(4)-RuvB(12)-RuvC(2) complex forms which resolves the HJ. Requires Mg(2+) as cofactor.

It is found in the cytoplasm. It catalyses the reaction Endonucleolytic cleavage at a junction such as a reciprocal single-stranded crossover between two homologous DNA duplexes (Holliday junction).. In terms of biological role, the RuvA-RuvB-RuvC complex processes Holliday junction (HJ) DNA during genetic recombination and DNA repair. Endonuclease that resolves HJ intermediates. Cleaves cruciform DNA by making single-stranded nicks across the HJ at symmetrical positions within the homologous arms, yielding a 5'-phosphate and a 3'-hydroxyl group; requires a central core of homology in the junction. The consensus cleavage sequence is 5'-(A/T)TT(C/G)-3'. Cleavage occurs on the 3'-side of the TT dinucleotide at the point of strand exchange. HJ branch migration catalyzed by RuvA-RuvB allows RuvC to scan DNA until it finds its consensus sequence, where it cleaves and resolves the cruciform DNA. This Pseudoalteromonas translucida (strain TAC 125) protein is Crossover junction endodeoxyribonuclease RuvC.